We begin with the raw amino-acid sequence, 379 residues long: Cobalt-precorrin-5B C(1)-methyltransferase (379 aa).

The protein belongs to the CbiD family.

It catalyses the reaction Co-precorrin-5B + S-adenosyl-L-methionine = Co-precorrin-6A + S-adenosyl-L-homocysteine. It participates in cofactor biosynthesis; adenosylcobalamin biosynthesis; cob(II)yrinate a,c-diamide from sirohydrochlorin (anaerobic route): step 6/10. In terms of biological role, catalyzes the methylation of C-1 in cobalt-precorrin-5B to form cobalt-precorrin-6A. The sequence is that of Cobalt-precorrin-5B C(1)-methyltransferase from Salmonella paratyphi A (strain ATCC 9150 / SARB42).